A 256-amino-acid chain; its full sequence is Nuclear shuttle protein (256 aa).

A compositionally biased stretch (polar residues) spans 1-16 (MYSTSNRRGRSQTQRG). Residues 1–46 (MYSTSNRRGRSQTQRGSHVRRTGVKRSYGAARGDDRRRPNVVSKTQ) form a disordered region. Residues 21-42 (RTGVKRSYGAARGDDRRRPNVV) carry the Bipartite nuclear localization signal motif. The Nuclear localization signal motif lies at 81 to 96 (SYVKTVPNRTRTYIKL). An interaction with Arabidopsis thaliana NSI protein region spans residues 150–187 (ELFGARIHCHGNLSVVPALKDRYYIRHVTKRVVSLEKD). The short motif at 177–198 (VTKRVVSLEKDTLLIDLHGTTQ) is the Nuclear export signal element.

Belongs to the begomovirus nuclear shuttle protein family. As to quaternary structure, binds to single-stranded and double-stranded viral DNA. Interacts with the host nuclear shuttle interacting (NSI) protein. This interaction may allow NSP to recruit NSI monomers to the viral genome and thus regulate nuclear export of viral genome by NSP.

Its subcellular location is the host nucleus. The protein resides in the host cytoplasm. It is found in the host cell membrane. In terms of biological role, binds to the genomic viral ssDNA, shuttles it into and out of the cell nucleus. Begomoviruses use 2 proteins to transport their DNA from cell to cell. The nuclear shuttle protein (NSP) shuttles it between nucleus and cytoplasm and the movement protein (MP) probably transports the DNA-NSP complex to the cell periphery and facilitates movement across the cell wall. This Squash leaf curl virus (SLCV) protein is Nuclear shuttle protein.